A 180-amino-acid chain; its full sequence is Large ribosomal subunit protein uL5 (180 aa).

Belongs to the universal ribosomal protein uL5 family. Part of the 50S ribosomal subunit; part of the 5S rRNA/L5/L18/L25 subcomplex. Contacts the 5S rRNA and the P site tRNA. Forms a bridge to the 30S subunit in the 70S ribosome.

In terms of biological role, this is one of the proteins that bind and probably mediate the attachment of the 5S RNA into the large ribosomal subunit, where it forms part of the central protuberance. In the 70S ribosome it contacts protein S13 of the 30S subunit (bridge B1b), connecting the 2 subunits; this bridge is implicated in subunit movement. Contacts the P site tRNA; the 5S rRNA and some of its associated proteins might help stabilize positioning of ribosome-bound tRNAs. This Streptococcus sanguinis (strain SK36) protein is Large ribosomal subunit protein uL5.